The sequence spans 206 residues: Small ribosomal subunit protein uS4 (206 aa).

An S4 RNA-binding domain is found at 96–156; sequence TRLDNVVYRM…EKSKTQARII (61 aa).

The protein belongs to the universal ribosomal protein uS4 family. Part of the 30S ribosomal subunit. Contacts protein S5. The interaction surface between S4 and S5 is involved in control of translational fidelity.

Its function is as follows. One of the primary rRNA binding proteins, it binds directly to 16S rRNA where it nucleates assembly of the body of the 30S subunit. In terms of biological role, with S5 and S12 plays an important role in translational accuracy. This chain is Small ribosomal subunit protein uS4, found in Colwellia psychrerythraea (strain 34H / ATCC BAA-681) (Vibrio psychroerythus).